The chain runs to 866 residues: MLRPGAQLLRGLLLRSCPLQGSPGRPRSVCGREGEEKPPLSAETQWKDRAETVIIGGGCVGVSLAYHLAKAGMKDVVLLEKSELTAGSTWHAAGLTTYFHPGINLKKIHYDSIKLYEKLEEETGQVVGFHQPGSIRLATTPVRVDEFKYQMTRTGWHATEQYLIEPEKIQEMFPLLNMNKVLAGLYNPGDGHIDPYSLTMALAAGARKCGALLKYPAPVTSLKARSDGTWDVETPQGSMRANRIVNAAGFWAREVGKMIGLEHPLIPVQHQYVVTSTISEVKALKRELPVLRDLEGSYYLRQERDGLLFGPYESQEKMKVQDSWVTNGVPPGFGKELFESDLDRIMEHIKAAMEMVPVLKKADIINVVNGPITYSPDILPMVGPHQGVRNYWVAIGFGYGIIHAGGVGKYLSDWILHGEPPFDLIELDPNRYGKWTTTQYTEAKARESYGFNNIVGYPKEERFAGRPTQRVSGLYQRLESKCSMGFHAGWEQPHWFYKPGQDTQYRPSFRRTNWFEPVGSEYKQVMQRVAVTDLSPFGKFNIKGQDSIRLLDHLFANVIPKVGFTNISHMLTPKGRVYAELTVSHQSPGEFLLITGSGSELHDLRWIEEEAVKGGYDVEIKNITDELGVLGVAGPQARKVLQKLTSEDLSDDVFKFLQTKSLKVSNIPVTAIRISYTGELGWELYHRREDSVALYDAIMNAGQEEGIDNFGTYAMNALRLEKAFRAWGLEMNCDTNPLEAGLEYFVKLNKPADFIGKQALKQIKAKGLKRRLVCLTLATDDVDPEGNESIWYNGKVVGNTTSGSYSYSIQKSLAFAYVPVQLSEVGQQVEVELLGKNYPAVIIQEPLVLTEPTRNRLQKKGGKDKT.

The transit peptide at 1–50 (MLRPGAQLLRGLLLRSCPLQGSPGRPRSVCGREGEEKPPLSAETQWKDRA) directs the protein to the mitochondrion. The interval 20-42 (QGSPGRPRSVCGREGEEKPPLSA) is disordered. FAD-binding positions include 59–60 (CV), 80–81 (EK), and 87–95 (GSTWHAAGL). H91 carries the tele-8alpha-FAD histidine modification. Position 114 is an N6-acetyllysine (K114). K148 is subject to N6-acetyllysine; alternate. Position 148 is an N6-succinyllysine; alternate (K148). K168 is subject to N6-acetyllysine. Residue V219 participates in FAD binding. N6-acetyllysine is present on K223. Residue W251 participates in FAD binding. N6-succinyllysine is present on residues K317 and K319. N6-acetyllysine occurs at positions 335 and 360. 397–402 (FGYGII) is an FAD binding site. N6-acetyllysine; alternate occurs at positions 434 and 523. N6-succinyllysine; alternate is present on residues K434 and K523. 580-582 (ELT) is a binding site for (6S)-5,6,7,8-tetrahydrofolate. N6-acetyllysine; alternate is present on K655. At K655 the chain carries N6-succinyllysine; alternate. (6S)-5,6,7,8-tetrahydrofolate contacts are provided by residues Y676, 683-685 (ELY), and Y744. Residue K764 is modified to N6-acetyllysine. An N6-succinyllysine modification is found at K795.

It belongs to the GcvT family. As to quaternary structure, monomer. FAD serves as cofactor.

The protein localises to the mitochondrion. It catalyses the reaction (6S)-5,6,7,8-tetrahydrofolyl-(gamma-L-Glu)(n) + N,N-dimethylglycine + oxidized [electron-transfer flavoprotein] + H(+) = (6R)-5,10-methylenetetrahydrofolyl-(gamma-L-Glu)(n) + sarcosine + reduced [electron-transfer flavoprotein]. Its pathway is amine and polyamine degradation; betaine degradation; sarcosine from betaine: step 2/2. Its function is as follows. Catalyzes the demethylation of N,N-dimethylglycine to sarcosine. Also has activity with sarcosine in vitro. In Homo sapiens (Human), this protein is Dimethylglycine dehydrogenase, mitochondrial (DMGDH).